Reading from the N-terminus, the 546-residue chain is Chaperonin GroEL 1 (546 aa).

ATP contacts are provided by residues Thr-30–Pro-33, Lys-51, Asp-87–Thr-91, Gly-415, and Asp-495. The tract at residues Asp-527–Phe-546 is disordered. Residues Gly-535–Phe-546 are compositionally biased toward gly residues.

This sequence belongs to the chaperonin (HSP60) family. As to quaternary structure, forms a cylinder of 14 subunits composed of two heptameric rings stacked back-to-back. Interacts with the co-chaperonin GroES.

The protein localises to the cytoplasm. The enzyme catalyses ATP + H2O + a folded polypeptide = ADP + phosphate + an unfolded polypeptide.. Functionally, together with its co-chaperonin GroES, plays an essential role in assisting protein folding. The GroEL-GroES system forms a nano-cage that allows encapsulation of the non-native substrate proteins and provides a physical environment optimized to promote and accelerate protein folding. The chain is Chaperonin GroEL 1 from Burkholderia lata (strain ATCC 17760 / DSM 23089 / LMG 22485 / NCIMB 9086 / R18194 / 383).